The chain runs to 215 residues: Adenylate kinase (215 aa).

10 to 15 (GAGKGT) is a binding site for ATP. The interval 30–59 (STGDMFRAAMKNNTELGKKAKSFMDNGDLV) is NMP. AMP is bound by residues threonine 31, arginine 36, 57–59 (DLV), 85–88 (GFPR), and glutamine 92. An LID region spans residues 126–163 (GRWICRTCGKTYHEIYNPPKVPGKCDLDGGELYQRDDD). Arginine 127 is an ATP binding site. Residues cysteine 130 and cysteine 133 each contribute to the Zn(2+) site. 136-137 (TY) contributes to the ATP binding site. Residues cysteine 150 and aspartate 153 each contribute to the Zn(2+) site. Residues arginine 160 and arginine 171 each contribute to the AMP site. Residue glutamine 199 participates in ATP binding.

Belongs to the adenylate kinase family. As to quaternary structure, monomer.

The protein resides in the cytoplasm. The catalysed reaction is AMP + ATP = 2 ADP. The protein operates within purine metabolism; AMP biosynthesis via salvage pathway; AMP from ADP: step 1/1. Its function is as follows. Catalyzes the reversible transfer of the terminal phosphate group between ATP and AMP. Plays an important role in cellular energy homeostasis and in adenine nucleotide metabolism. This Listeria monocytogenes serotype 4b (strain CLIP80459) protein is Adenylate kinase.